A 337-amino-acid chain; its full sequence is AP2/ERF and B3 domain-containing transcription factor At1g50680 (337 aa).

A DNA-binding region (AP2/ERF) is located at residues K27–P84. Residues F157–N271 constitute a DNA-binding region (TF-B3).

Belongs to the AP2/ERF transcription factor family. RAV subfamily.

It is found in the nucleus. Functionally, probably acts as a transcriptional activator. Binds to the GCC-box pathogenesis-related promoter element. May be involved in the regulation of gene expression by stress factors and by components of stress signal transduction pathways. This Arabidopsis thaliana (Mouse-ear cress) protein is AP2/ERF and B3 domain-containing transcription factor At1g50680.